We begin with the raw amino-acid sequence, 96 residues long: Co-chaperonin GroES (96 aa).

Belongs to the GroES chaperonin family. As to quaternary structure, heptamer of 7 subunits arranged in a ring. Interacts with the chaperonin GroEL.

The protein localises to the cytoplasm. Together with the chaperonin GroEL, plays an essential role in assisting protein folding. The GroEL-GroES system forms a nano-cage that allows encapsulation of the non-native substrate proteins and provides a physical environment optimized to promote and accelerate protein folding. GroES binds to the apical surface of the GroEL ring, thereby capping the opening of the GroEL channel. The sequence is that of Co-chaperonin GroES from Haemophilus influenzae (strain PittGG).